The following is a 343-amino-acid chain: tRNA-specific 2-thiouridylase MnmA (343 aa).

Residues A7 to S14 and M33 each bind ATP. Residue C87 is the Nucleophile of the active site. Residues C87 and C184 are joined by a disulfide bond. G111 contacts ATP. Residues K135 to Q137 form an interaction with tRNA region. The active-site Cysteine persulfide intermediate is the C184. Residues R289–Y290 form an interaction with tRNA region.

This sequence belongs to the MnmA/TRMU family.

The protein resides in the cytoplasm. It catalyses the reaction S-sulfanyl-L-cysteinyl-[protein] + uridine(34) in tRNA + AH2 + ATP = 2-thiouridine(34) in tRNA + L-cysteinyl-[protein] + A + AMP + diphosphate + H(+). Functionally, catalyzes the 2-thiolation of uridine at the wobble position (U34) of tRNA, leading to the formation of s(2)U34. The protein is tRNA-specific 2-thiouridylase MnmA of Desulforudis audaxviator (strain MP104C).